Consider the following 684-residue polypeptide: DNA gyrase subunit B, novobiocin-sensitive (684 aa).

The disordered stretch occupies residues 1–22 (MADSGNPNENTPSVATGENGEV). The novobiocin-binding stretch occupies residues 154–302 (VKTDGYRWTQ…RMLSVEIAMQ (149 aa)). The Toprim domain maps to 463–577 (CEIFIVEGDS…AGHVYLSRPP (115 aa)). Residues glutamate 469, aspartate 542, and aspartate 544 each coordinate Mg(2+).

Belongs to the type II topoisomerase GyrB family. As to quaternary structure, heterotetramer, composed of two GyrA and two GyrB chains. In the heterotetramer, GyrA contains the active site tyrosine that forms a transient covalent intermediate with DNA, while GyrB binds cofactors and catalyzes ATP hydrolysis. The cofactor is Mg(2+). It depends on Mn(2+) as a cofactor. Ca(2+) is required as a cofactor.

Its subcellular location is the cytoplasm. The enzyme catalyses ATP-dependent breakage, passage and rejoining of double-stranded DNA.. In terms of biological role, a type II topoisomerase that negatively supercoils closed circular double-stranded (ds) DNA in an ATP-dependent manner to modulate DNA topology and maintain chromosomes in an underwound state. Negative supercoiling favors strand separation, and DNA replication, transcription, recombination and repair, all of which involve strand separation. Also able to catalyze the interconversion of other topological isomers of dsDNA rings, including catenanes and knotted rings. Type II topoisomerases break and join 2 DNA strands simultaneously in an ATP-dependent manner. This is DNA gyrase subunit B, novobiocin-sensitive from Streptomyces niveus (Streptomyces spheroides).